Reading from the N-terminus, the 299-residue chain is DNA-binding transcriptional activator HetR (299 aa).

Residue Ser152 is part of the active site.

This sequence belongs to the peptidase S48 family. Homodimer; disulfide-linked.

In terms of biological role, might be involved in temporal and/or spatial regulation of nitrogen fixation. Dimerization is required for DNA-binding. Has both a protease and a DNA-binding activity. This chain is DNA-binding transcriptional activator HetR, found in Leptolyngbya boryana (Plectonema boryanum).